The chain runs to 336 residues: Glyceraldehyde-3-phosphate dehydrogenase 1 (336 aa).

NAD(+) is bound by residues 12 to 13 (RI), D34, and R79. D-glyceraldehyde 3-phosphate contacts are provided by residues 149–151 (SCT), T180, 209–210 (TG), and R232. Residue C150 is the Nucleophile of the active site. N314 provides a ligand contact to NAD(+).

This sequence belongs to the glyceraldehyde-3-phosphate dehydrogenase family. As to quaternary structure, homotetramer.

It is found in the cytoplasm. It carries out the reaction D-glyceraldehyde 3-phosphate + phosphate + NAD(+) = (2R)-3-phospho-glyceroyl phosphate + NADH + H(+). Its pathway is carbohydrate degradation; glycolysis; pyruvate from D-glyceraldehyde 3-phosphate: step 1/5. With respect to regulation, inhibited by koningic acid through the interaction of cysteine residues with koningic acid even at very low concentrations. The sequence is that of Glyceraldehyde-3-phosphate dehydrogenase 1 (gpd1) from Trichoderma koningii (Hypocrea koningii).